A 428-amino-acid polypeptide reads, in one-letter code: MKVKVENVEKNVVQLEIEVDTAKFEEGMQQSYLKNVKKFNVPGFRKGKAPRNIIERYYGEQALYDDAINIVCSEAYDNAIEENNINPVDRPEIDIVQIGKNQNLIFTAKVTVKPEVELGAYMGVEAKKAEANVTDEDLENEFNKVVEKNARLVSVTDRPIQSGDTAVIDFEGFIDSVPFEGGKGEDYSLVIGSGTFIPGFEDQLIGKNIADDVDVNVSFPEEYGKEELNGKEALFKVLIKEIKVKELPTVDDEFAKDISEFDTLEEYKNDLRNKLEESAKSKAERDNEESVIQAVVGNATVDIPNVMVEKHIDAMARDFDMRLRYQGLDLQRYLEIMGTDFEGFREQFRERAANEVKIQLVIEKISKVENVEATDADVEEEITKTAEAYKQPVEELKKTLRPEDLEYVKNDIAFRKTIKILVDNAKLN.

The PPIase FKBP-type domain maps to 163–248; that stretch reads GDTAVIDFEG…IKEIKVKELP (86 aa).

The protein belongs to the FKBP-type PPIase family. Tig subfamily.

The protein resides in the cytoplasm. The catalysed reaction is [protein]-peptidylproline (omega=180) = [protein]-peptidylproline (omega=0). In terms of biological role, involved in protein export. Acts as a chaperone by maintaining the newly synthesized protein in an open conformation. Functions as a peptidyl-prolyl cis-trans isomerase. The sequence is that of Trigger factor from Ruminiclostridium cellulolyticum (strain ATCC 35319 / DSM 5812 / JCM 6584 / H10) (Clostridium cellulolyticum).